The following is a 57-amino-acid chain: Large ribosomal subunit protein bL32 (57 aa).

The disordered stretch occupies residues 1 to 23 (MAVPKKRTSKTRTNRRRAQKKAR).

Belongs to the bacterial ribosomal protein bL32 family.

The chain is Large ribosomal subunit protein bL32 from Natranaerobius thermophilus (strain ATCC BAA-1301 / DSM 18059 / JW/NM-WN-LF).